We begin with the raw amino-acid sequence, 1494 residues long: B-cell CLL/lymphoma 9-like protein (1494 aa).

Disordered stretches follow at residues 1–236 (MRIL…PPSQ) and 269–496 (VPRA…DMGQ). Pro residues predominate over residues 20–37 (GSPPLSPRGHCPPAPAKP). Phosphoserine is present on residues Ser-21 and Ser-25. Lys-36 carries the N6-acetyllysine modification. Composition is skewed to polar residues over residues 45–70 (TNHG…TCNL) and 85–96 (NQISPSNSSLKN). Residue Ser-88 is modified to Phosphoserine. N6-acetyllysine occurs at positions 108 and 110. Composition is skewed to basic and acidic residues over residues 114-126 (ERSV…EQRE) and 134-153 (SEAK…ERKQ). Phosphoserine is present on residues Ser-116 and Ser-118. Lys-137 carries the N6-acetyllysine modification. The span at 193-207 (PGQTAQLPLSESSAP) shows a compositional bias: polar residues. Composition is skewed to pro residues over residues 279–289 (KVPPTPEPLPL) and 299–322 (SQPP…PPEG). Residues 302–530 (PPLPPPPPAP…QEEYYEEKRR (229 aa)) are necessary for interaction with CTNNB1. Over residues 348-360 (THPNTPTAATANN) the composition is skewed to low complexity. Basic and acidic residues predominate over residues 396–418 (LSKEQLEHRERSLQTLRDIERLL). Residue Ser-421 is modified to Phosphoserine. Residue Thr-511 is modified to Phosphothreonine. Asymmetric dimethylarginine is present on Arg-677. Residues Ser-747, Ser-810, Ser-912, Ser-923, Ser-935, Ser-939, Ser-944, Ser-972, Ser-984, Ser-988, Ser-994, Ser-1001, Ser-1007, and Ser-1014 each carry the phosphoserine modification. Disordered stretches follow at residues 905–1082 (RGLG…NPLS) and 1113–1206 (ELLP…PGGP). Residues 932-957 (PTLSQVHSPLVTSPSANLKSPQTPSQ) are compositionally biased toward polar residues. Over residues 974–993 (QVLSSSLGVRSPTGSPSRLK) the composition is skewed to polar residues. A compositionally biased stretch (polar residues) spans 1016–1035 (GVSQNKQPPLSINSSSTLGN). Residues 1046-1059 (PRNSSSAPPANPSS) show a composition bias toward low complexity. Residues 1060–1082 (GLMNPSLPFTSSPDPTPSQNPLS) are compositionally biased toward polar residues. The span at 1119 to 1129 (PLLPPPPPPQG) shows a compositional bias: pro residues. The span at 1133-1143 (GISNNQPNQMH) shows a compositional bias: polar residues. Residues 1165 to 1176 (HEPPPTMLPSPT) are compositionally biased toward pro residues. Residue Lys-1339 forms a Glycyl lysine isopeptide (Lys-Gly) (interchain with G-Cter in SUMO2) linkage.

It belongs to the BCL9 family. As to quaternary structure, found in a complex with CDC73; CTNNB1 and PYGO1. Interacts with CTNNB1. As to expression, expressed in kidney, liver, lung, testis, brain, spleen, heart and skeletal muscle. Highly expressed in numerous colorectal tumors compared to corresponding non-cancerous tissues.

It localises to the nucleus. Functionally, transcriptional regulator that acts as an activator. Promotes beta-catenin transcriptional activity. Plays a role in tumorigenesis. Enhances the neoplastic transforming activity of CTNNB1. This chain is B-cell CLL/lymphoma 9-like protein (Bcl9l), found in Mus musculus (Mouse).